The following is a 671-amino-acid chain: DNA ligase (671 aa).

Residues 32 to 36, 81 to 82, and Glu113 contribute to the NAD(+) site; these read DAEYD and SL. Residue Lys115 is the N6-AMP-lysine intermediate of the active site. 4 residues coordinate NAD(+): Arg136, Glu173, Lys290, and Lys314. Residues Cys408, Cys411, Cys426, and Cys432 each coordinate Zn(2+). A BRCT domain is found at 593-671; the sequence is EIDSPFAGKT…EAEMLRLLGS (79 aa).

The protein belongs to the NAD-dependent DNA ligase family. LigA subfamily. Requires Mg(2+) as cofactor. Mn(2+) is required as a cofactor.

It catalyses the reaction NAD(+) + (deoxyribonucleotide)n-3'-hydroxyl + 5'-phospho-(deoxyribonucleotide)m = (deoxyribonucleotide)n+m + AMP + beta-nicotinamide D-nucleotide.. In terms of biological role, DNA ligase that catalyzes the formation of phosphodiester linkages between 5'-phosphoryl and 3'-hydroxyl groups in double-stranded DNA using NAD as a coenzyme and as the energy source for the reaction. It is essential for DNA replication and repair of damaged DNA. In Shigella sonnei (strain Ss046), this protein is DNA ligase.